The following is a 456-amino-acid chain: Glycine--tRNA ligase (456 aa).

Residues R98 and E168 each contribute to the substrate site. Residues 200–202 (RNE), 210–215 (FRTREF), 285–286 (EL), and 329–332 (GVER) each bind ATP. 215 to 219 (FEQME) lines the substrate pocket. 325 to 329 (EPSVG) serves as a coordination point for substrate.

This sequence belongs to the class-II aminoacyl-tRNA synthetase family. Homodimer.

Its subcellular location is the cytoplasm. The catalysed reaction is tRNA(Gly) + glycine + ATP = glycyl-tRNA(Gly) + AMP + diphosphate. Its function is as follows. Catalyzes the attachment of glycine to tRNA(Gly). The protein is Glycine--tRNA ligase of Mycoplasma mycoides subsp. mycoides SC (strain CCUG 32753 / NCTC 10114 / PG1).